The primary structure comprises 320 residues: Acetyl-coenzyme A carboxylase carboxyl transferase subunit alpha (320 aa).

Positions 33 to 294 constitute a CoA carboxyltransferase C-terminal domain; the sequence is AFESEIQALR…GDAVEDELKA (262 aa).

It belongs to the AccA family. As to quaternary structure, acetyl-CoA carboxylase is a heterohexamer composed of biotin carboxyl carrier protein (AccB), biotin carboxylase (AccC) and two subunits each of ACCase subunit alpha (AccA) and ACCase subunit beta (AccD).

The protein resides in the cytoplasm. It catalyses the reaction N(6)-carboxybiotinyl-L-lysyl-[protein] + acetyl-CoA = N(6)-biotinyl-L-lysyl-[protein] + malonyl-CoA. Its pathway is lipid metabolism; malonyl-CoA biosynthesis; malonyl-CoA from acetyl-CoA: step 1/1. Functionally, component of the acetyl coenzyme A carboxylase (ACC) complex. First, biotin carboxylase catalyzes the carboxylation of biotin on its carrier protein (BCCP) and then the CO(2) group is transferred by the carboxyltransferase to acetyl-CoA to form malonyl-CoA. The sequence is that of Acetyl-coenzyme A carboxylase carboxyl transferase subunit alpha from Caulobacter sp. (strain K31).